Reading from the N-terminus, the 393-residue chain is Acetyl-CoA acetyltransferase (393 aa).

The Acyl-thioester intermediate role is filled by cysteine 88. Catalysis depends on proton acceptor residues histidine 349 and cysteine 379.

Belongs to the thiolase-like superfamily. Thiolase family.

It localises to the cytoplasm. The catalysed reaction is 2 acetyl-CoA = acetoacetyl-CoA + CoA. It participates in metabolic intermediate biosynthesis; (R)-mevalonate biosynthesis; (R)-mevalonate from acetyl-CoA: step 1/3. The chain is Acetyl-CoA acetyltransferase (atoB) from Pseudomonas aeruginosa (strain ATCC 15692 / DSM 22644 / CIP 104116 / JCM 14847 / LMG 12228 / 1C / PRS 101 / PAO1).